A 545-amino-acid polypeptide reads, in one-letter code: Resolvase homolog YokA (545 aa).

In terms of domain architecture, Resolvase/invertase-type recombinase catalytic spans 14-165; the sequence is NILGYLRRSR…GAKYTYAAQG (152 aa). A coiled-coil region spans residues 19 to 46; sequence LRRSRQDMEREKRTGEDTLTEQKELMNK. Serine 22 (O-(5'-phospho-DNA)-serine intermediate) is an active-site residue. Positions 173-303 form a DNA-binding region, recombinase; that stretch reads PYGYQLNKKT…VKIANKVPLL (131 aa). Residues 402–475 adopt a coiled-coil conformation; the sequence is NMKTKKQMSE…QDTQSEIDSN (74 aa).

This sequence in the N-terminal section; belongs to the site-specific recombinase resolvase family.

The sequence is that of Resolvase homolog YokA (yokA) from Bacillus subtilis (strain 168).